Consider the following 418-residue polypeptide: Cell division protein FtsZ (418 aa).

GTP-binding positions include 27 to 31, 114 to 116, Glu145, Lys149, and Asp193; these read GGGSN and GTG. Residues 386–418 are disordered; it reads KNGVKGHTFGVPLPSVNEDLDEPTFLRNRNKGL.

The protein belongs to the FtsZ family. In terms of assembly, homodimer. Polymerizes to form a dynamic ring structure in a strictly GTP-dependent manner. Interacts directly with several other division proteins.

It localises to the cytoplasm. Essential cell division protein that forms a contractile ring structure (Z ring) at the future cell division site. The regulation of the ring assembly controls the timing and the location of cell division. One of the functions of the FtsZ ring is to recruit other cell division proteins to the septum to produce a new cell wall between the dividing cells. Binds GTP and shows GTPase activity. The sequence is that of Cell division protein FtsZ from Treponema pallidum (strain Nichols).